A 38-amino-acid polypeptide reads, in one-letter code: Photosystem II reaction center protein Y (38 aa).

The helical transmembrane segment at 4–22 threads the bilayer; that stretch reads TIVVFAPIIAALAWVVFNI.

Belongs to the PsbY family. PSII is composed of 1 copy each of membrane proteins PsbA, PsbB, PsbC, PsbD, PsbE, PsbF, PsbH, PsbI, PsbJ, PsbK, PsbL, PsbM, PsbT, PsbX, PsbY, Psb30/Ycf12, peripheral proteins PsbO, CyanoQ (PsbQ), PsbU, PsbV and a large number of cofactors. It forms dimeric complexes.

Its subcellular location is the cellular thylakoid membrane. Loosely associated component of the core of photosystem II (PSII), it is not always seen in crystals. PSII is a light-driven water plastoquinone oxidoreductase, using light energy to abstract electrons from H(2)O, generating a proton gradient subsequently used for ATP formation. The protein is Photosystem II reaction center protein Y of Prochlorococcus marinus (strain MIT 9215).